The following is a 454-amino-acid chain: Capsid vertex component 1 (454 aa).

The segment at threonine 197–asparagine 227 is disordered.

The protein belongs to the herpesviridae CVC1 protein family. As to quaternary structure, interacts (via C-terminus) with capsid vertex component 2/CVC2.

The protein resides in the virion. Its subcellular location is the host nucleus. Functionally, capsid vertex-specific component that plays a role during viral DNA encapsidation, assuring correct genome cleavage and presumably stabilizing capsids that contain full-length viral genomes. In Human herpesvirus 8 type P (isolate GK18) (HHV-8), this protein is Capsid vertex component 1.